A 361-amino-acid polypeptide reads, in one-letter code: POU domain, class 3, transcription factor 4 (361 aa).

Disordered regions lie at residues 99 to 131 and 144 to 192; these read PHVAHHSPHTNHPNAWGASPAPNPSITSSGQPL and MLEH…PTSD. Polar residues predominate over residues 122-131; the sequence is PSITSSGQPL. The span at 165–183 shows a compositional bias: basic and acidic residues; the sequence is VLREPPDHGELGSHHCQDH. Residues 186-260 enclose the POU-specific domain; sequence EETPTSDELE…LLNKWLEEAD (75 aa). Ser265 bears the Phosphoserine mark. A DNA-binding region (homeobox) is located at residues 278 to 337; sequence KRKKRTSIEVSVKGVLETHFLKCPKPAAQEISSLADSLQLEKEVVRVWFCNRRQKEKRMT.

Belongs to the POU transcription factor family. Class-3 subfamily. As to quaternary structure, interacts with HNRNPU. As to expression, brain specific.

It localises to the nucleus. Its function is as follows. Probable transcription factor which exert its primary action widely during early neural development and in a very limited set of neurons in the mature brain. In Homo sapiens (Human), this protein is POU domain, class 3, transcription factor 4 (POU3F4).